A 106-amino-acid chain; its full sequence is NADH-quinone oxidoreductase subunit K (106 aa).

Helical transmembrane passes span 10 to 30, 34 to 54, and 67 to 87; these read VTYI…GVLI, IVII…VFVT, and IVFF…ALVI.

It belongs to the complex I subunit 4L family. In terms of assembly, NDH-1 is composed of 14 different subunits. Subunits NuoA, H, J, K, L, M, N constitute the membrane sector of the complex.

Its subcellular location is the cell inner membrane. It catalyses the reaction a quinone + NADH + 5 H(+)(in) = a quinol + NAD(+) + 4 H(+)(out). In terms of biological role, NDH-1 shuttles electrons from NADH, via FMN and iron-sulfur (Fe-S) centers, to quinones in the respiratory chain. The immediate electron acceptor for the enzyme in this species is believed to be ubiquinone. Couples the redox reaction to proton translocation (for every two electrons transferred, four hydrogen ions are translocated across the cytoplasmic membrane), and thus conserves the redox energy in a proton gradient. This chain is NADH-quinone oxidoreductase subunit K, found in Leptospira biflexa serovar Patoc (strain Patoc 1 / Ames).